The chain runs to 260 residues: Lipid II isoglutaminyl synthase (glutamine-hydrolyzing) subunit GatD (260 aa).

The GATase cobBQ-type domain maps to 16–214 (QLNIAHLYGN…FHGPILSRNA (199 aa)). The active-site Nucleophile is cysteine 107. Residue arginine 142 participates in substrate binding. The active site involves histidine 206.

Belongs to the CobB/CobQ family. GatD subfamily. In terms of assembly, forms a heterodimer with MurT.

It carries out the reaction beta-D-GlcNAc-(1-&gt;4)-Mur2Ac(oyl-L-Ala-gamma-D-Glu-L-Lys-D-Ala-D-Ala)-di-trans,octa-cis-undecaprenyl diphosphate + L-glutamine + ATP + H2O = beta-D-GlcNAc-(1-&gt;4)-Mur2Ac(oyl-L-Ala-D-isoglutaminyl-L-Lys-D-Ala-D-Ala)-di-trans,octa-cis-undecaprenyl diphosphate + L-glutamate + ADP + phosphate + H(+). The catalysed reaction is L-glutamine + H2O = L-glutamate + NH4(+). The protein operates within cell wall biogenesis; peptidoglycan biosynthesis. In terms of biological role, the lipid II isoglutaminyl synthase complex catalyzes the formation of alpha-D-isoglutamine in the cell wall lipid II stem peptide. The GatD subunit catalyzes the hydrolysis of glutamine to glutamate and ammonia. The resulting ammonia molecule is channeled to the active site of MurT. This chain is Lipid II isoglutaminyl synthase (glutamine-hydrolyzing) subunit GatD, found in Streptococcus pneumoniae (strain ATCC BAA-255 / R6).